The primary structure comprises 31 residues: Glucagon-3 (31 aa).

It belongs to the glucagon family.

The protein localises to the secreted. Its function is as follows. Glucagon plays a key role in glucose metabolism and homeostasis. Regulates blood glucose by increasing gluconeogenesis and decreasing glycolysis. The protein is Glucagon-3 of Huso dauricus (Kaluga sturgeon).